The following is a 358-amino-acid chain: Alanine racemase (358 aa).

Lysine 35 functions as the Proton acceptor; specific for D-alanine in the catalytic mechanism. Residue lysine 35 is modified to N6-(pyridoxal phosphate)lysine. Arginine 130 contacts substrate. Tyrosine 255 functions as the Proton acceptor; specific for L-alanine in the catalytic mechanism. A substrate-binding site is contributed by methionine 303.

The protein belongs to the alanine racemase family. Requires pyridoxal 5'-phosphate as cofactor.

The enzyme catalyses L-alanine = D-alanine. It functions in the pathway amino-acid biosynthesis; D-alanine biosynthesis; D-alanine from L-alanine: step 1/1. Its function is as follows. Catalyzes the interconversion of L-alanine and D-alanine. May also act on other amino acids. In Shewanella sp. (strain MR-4), this protein is Alanine racemase (alr).